The chain runs to 555 residues: Potassium-transporting ATPase potassium-binding subunit (555 aa).

Transmembrane regions (helical) follow at residues 2–22, 60–80, 130–150, 173–193, 246–266, 278–298, 374–394, 412–432, 483–503, and 525–545; these read IWVA…PTGI, QYAL…YFIF, IGIT…VMAF, VFLP…VPQT, MSNI…PFTY, ILFV…TTSE, AGFV…GLMV, LIAV…ALAL, LVMF…AASL, and GIFI…MLVL.

Belongs to the KdpA family. The system is composed of three essential subunits: KdpA, KdpB and KdpC.

It localises to the cell membrane. Its function is as follows. Part of the high-affinity ATP-driven potassium transport (or Kdp) system, which catalyzes the hydrolysis of ATP coupled with the electrogenic transport of potassium into the cytoplasm. This subunit binds the extracellular potassium ions and delivers the ions to the membrane domain of KdpB through an intramembrane tunnel. This Bacillus cereus (strain ZK / E33L) protein is Potassium-transporting ATPase potassium-binding subunit.